The chain runs to 237 residues: Chalcone--flavanone isomerase (237 aa).

Residues Thr50 and Ser192 each contribute to the substrate site.

This sequence belongs to the chalcone isomerase family.

The enzyme catalyses a chalcone = a flavanone.. It functions in the pathway secondary metabolite biosynthesis; flavonoid biosynthesis. Its function is as follows. Catalyzes the intramolecular cyclization of bicyclic chalcones into tricyclic (S)-flavanones. Responsible for the isomerization of 4,2',4',6'-tetrahydroxychalcone (also termed chalcone) into naringenin. This is Chalcone--flavanone isomerase (CHI) from Callistephus chinensis (China aster).